The sequence spans 118 residues: Sarafotoxin-i1 (118 aa).

Residues 1–23 form the signal peptide; it reads MALLPRLAAGGLLLLLALAALDG. Residues 24–84 constitute a propeptide that is removed on maturation; it reads KPAPPKLLQK…LSPLRKPQPL (61 aa). 2 cysteine pairs are disulfide-bonded: Cys85–Cys99 and Cys87–Cys95. Positions 112-118 are excised as a propeptide; sequence PSPIQSS.

The protein belongs to the endothelin/sarafotoxin family. In terms of processing, different length molecules ranging from 15 (85-99) to 30 amino acids (85-114) have been found in the venom. In terms of tissue distribution, expressed by the venom gland.

The protein resides in the secreted. In terms of biological role, vasoconstrictor activity. These toxins cause cardiac arrest probably as a result of coronary vasospasm. Sarafotoxin-i3: vasoconstrictor activity. Causes cardiac arrest probably as a result of coronary vasospasm. Displays low agonistic activities towards endothelin-2 receptor (EDNRB) (displays affinity in the micromolar range). The polypeptide is Sarafotoxin-i1 (Atractaspis irregularis (Variable burrowing asp)).